A 607-amino-acid polypeptide reads, in one-letter code: Arginine--tRNA ligase (607 aa).

The 'HIGH' region signature appears at 147–157 (PNIAKEMHVGH).

The protein belongs to the class-I aminoacyl-tRNA synthetase family. As to quaternary structure, monomer.

The protein resides in the cytoplasm. The catalysed reaction is tRNA(Arg) + L-arginine + ATP = L-arginyl-tRNA(Arg) + AMP + diphosphate. This is Arginine--tRNA ligase from Prochlorococcus marinus (strain NATL1A).